An 82-amino-acid polypeptide reads, in one-letter code: Translational regulator CsrA (82 aa).

It belongs to the CsrA/RsmA family. As to quaternary structure, homodimer; the beta-strands of each monomer intercalate to form a hydrophobic core, while the alpha-helices form wings that extend away from the core.

The protein resides in the cytoplasm. In terms of biological role, a translational regulator that binds mRNA to regulate translation initiation and/or mRNA stability. Usually binds in the 5'-UTR at or near the Shine-Dalgarno sequence preventing ribosome-binding, thus repressing translation. Its main target seems to be the major flagellin gene, while its function is anatagonized by FliW. The sequence is that of Translational regulator CsrA from Geobacillus sp. (strain WCH70).